Consider the following 361-residue polypeptide: Outer membrane protein P2 (361 aa).

The signal sequence occupies residues 1–20; the sequence is MKKTLAALIVGAFAASAANA.

This sequence belongs to the Gram-negative porin family. As to quaternary structure, homotrimer.

Its subcellular location is the cell outer membrane. Its function is as follows. Forms pores that allow passive diffusion of small molecules across the outer membrane. This Haemophilus influenzae protein is Outer membrane protein P2 (ompP2).